Consider the following 404-residue polypeptide: MAAFVRLLERLGWAARAQQVVEQEVEEECSVPGASGSLLAAPRCWQRLHRGAAATSGLRFGASAVQGWRARMEDAHCARLALPGLPSGWAFFAVLDGHGGARAARFGARHLPGYVLGELGPAPQEPDGVRQALRSAFLQADAQLSALWPRGDPGGSTAVALLVSPRFLYLAHCGDSRALLSRSGSVAFCTEDHRPHRPRERERIHDAGGTVRRRRVEGSLAVSRALGDFAYKQAPGRPPELQLVSAEPEVAALARQDEDEFVLLASDGVWDALSGADLAGLVTSRLRLGLDLELLCAQLLDTCLCKGSLDNMTCMVVCFPGAPRPCEEAISKEMALDEALSHKVAELYASAQEPPGLNTVFRTLASEDIPGLPPGGGLHSKAAVIAEAYSKLHQTPGECQEEEW.

In terms of domain architecture, PPM-type phosphatase spans 59–319 (RFGASAVQGW…DNMTCMVVCF (261 aa)). Mn(2+) contacts are provided by Asp96, Gly97, Asp267, and Asp310.

It belongs to the PP2C family. Requires Mg(2+) as cofactor. Mn(2+) is required as a cofactor.

It carries out the reaction O-phospho-L-seryl-[protein] + H2O = L-seryl-[protein] + phosphate. The enzyme catalyses O-phospho-L-threonyl-[protein] + H2O = L-threonyl-[protein] + phosphate. In Mus musculus (Mouse), this protein is Probable protein phosphatase 1N (Ppm1n).